Here is a 313-residue protein sequence, read N- to C-terminus: Ribosomal RNA small subunit methyltransferase H (313 aa).

S-adenosyl-L-methionine is bound by residues 33–35 (AGH), glutamate 52, phenylalanine 80, aspartate 101, and glutamine 108.

Belongs to the methyltransferase superfamily. RsmH family.

It is found in the cytoplasm. The catalysed reaction is cytidine(1402) in 16S rRNA + S-adenosyl-L-methionine = N(4)-methylcytidine(1402) in 16S rRNA + S-adenosyl-L-homocysteine + H(+). Its function is as follows. Specifically methylates the N4 position of cytidine in position 1402 (C1402) of 16S rRNA. The polypeptide is Ribosomal RNA small subunit methyltransferase H (Spiroplasma kunkelii).